Reading from the N-terminus, the 348-residue chain is Dihydroorotase (348 aa).

Residues His-17 and His-19 each contribute to the Zn(2+) site. Substrate is bound by residues 19 to 21 (HLR) and Asn-45. Lys-103, His-140, and His-178 together coordinate Zn(2+). Residue Lys-103 is modified to N6-carboxylysine. His-140 provides a ligand contact to substrate. Leu-223 is a substrate binding site. Asp-251 contributes to the Zn(2+) binding site. Residue Asp-251 is part of the active site. His-255 and Ala-267 together coordinate substrate.

It belongs to the metallo-dependent hydrolases superfamily. DHOase family. Class II DHOase subfamily. As to quaternary structure, homodimer. Requires Zn(2+) as cofactor.

It catalyses the reaction (S)-dihydroorotate + H2O = N-carbamoyl-L-aspartate + H(+). The protein operates within pyrimidine metabolism; UMP biosynthesis via de novo pathway; (S)-dihydroorotate from bicarbonate: step 3/3. Its function is as follows. Catalyzes the reversible cyclization of carbamoyl aspartate to dihydroorotate. The chain is Dihydroorotase from Salmonella paratyphi A (strain ATCC 9150 / SARB42).